A 375-amino-acid chain; its full sequence is tRNA-specific 2-thiouridylase MnmA (375 aa).

ATP contacts are provided by residues 12-19 (GMSGGVDS) and Met38. The segment at 98–100 (NPD) is interaction with target base in tRNA. Cys103 functions as the Nucleophile in the catalytic mechanism. A disulfide bridge links Cys103 with Cys200. Gly127 serves as a coordination point for ATP. The interval 150–152 (KDQ) is interaction with tRNA. Catalysis depends on Cys200, which acts as the Cysteine persulfide intermediate. The interaction with tRNA stretch occupies residues 312–313 (RY).

This sequence belongs to the MnmA/TRMU family.

Its subcellular location is the cytoplasm. It catalyses the reaction S-sulfanyl-L-cysteinyl-[protein] + uridine(34) in tRNA + AH2 + ATP = 2-thiouridine(34) in tRNA + L-cysteinyl-[protein] + A + AMP + diphosphate + H(+). Functionally, catalyzes the 2-thiolation of uridine at the wobble position (U34) of tRNA, leading to the formation of s(2)U34. The sequence is that of tRNA-specific 2-thiouridylase MnmA from Lactobacillus delbrueckii subsp. bulgaricus (strain ATCC 11842 / DSM 20081 / BCRC 10696 / JCM 1002 / NBRC 13953 / NCIMB 11778 / NCTC 12712 / WDCM 00102 / Lb 14).